A 258-amino-acid chain; its full sequence is Peroxisomal membrane protein 11B (258 aa).

K43 carries the N6-acetyllysine modification. The segment at V210–P258 is interaction with PEX19, PEX11G and FIS1 and peroxisome targeting. The chain crosses the membrane as a helical span at residues G232–L254.

Belongs to the peroxin-11 family. In terms of assembly, homodimer. Heterodimer with PEX11G. Interacts with PEX19. Interacts with FIS1.

The protein resides in the peroxisome membrane. Involved in peroxisomal proliferation. May regulate peroxisome division by recruiting the dynamin-related GTPase DNM1L to the peroxisomal membrane. Promotes membrane protrusion and elongation on the peroxisomal surface. The sequence is that of Peroxisomal membrane protein 11B (PEX11B) from Bos taurus (Bovine).